The primary structure comprises 415 residues: Lysosome-associated membrane glycoprotein 2 (415 aa).

Residues 1–25 form the signal peptide; the sequence is MCLSPVKGAKLILIFLFLGAVQSNA. A first lumenal domain region spans residues 26-188; that stretch reads LIVNLTDSKG…SKNEQVCEED (163 aa). At 26–379 the chain is on the lumenal side; it reads LIVNLTDSKG…AQDCSADEDN (354 aa). N-linked (GlcNAc...) asparagine glycosylation is found at Asn29, Asn45, Asn54, Asn57, Asn97, Asn115, and Asn175. An intrachain disulfide couples Cys37 to Cys75. A disulfide bridge links Cys149 with Cys185. The interval 189–233 is hinge; the sequence is QTPTTVAPIIHTTAPSTTTTLTPTSTPTPTPTPTPTVGNYSIRNG. Residues 202–213 are compositionally biased toward low complexity; it reads APSTTTTLTPTS. The interval 202 to 227 is disordered; the sequence is APSTTTTLTPTSTPTPTPTPTPTVGN. N-linked (GlcNAc...) asparagine glycans are attached at residues Asn227, Asn234, Asn247, Asn265, Asn280, Asn312, Asn317, Asn322, and Asn361. Positions 234 to 379 are second lumenal domain; sequence NTTCLLATMG…AQDCSADEDN (146 aa). Cys237 and Cys270 are oxidised to a cystine. Cys336 and Cys373 are disulfide-bonded. Residues 380–404 traverse the membrane as a helical segment; the sequence is FLVPIAVGAALGGVLILVLLAYFIG. Residues 405–415 are Cytoplasmic-facing; it reads LKRHHTGYEQF. Positions 406–409 are important for binding and subsequent lysosomal degradation of target proteins; sequence KRHH.

Belongs to the LAMP family. Monomer. Forms large homooligomers. Interacts (via its cytoplasmic region) with HSPA8; HSPA8 mediates recruitment of proteins with a KFERQ motif to the surface of the lysosome for chaperone-mediated autophagy. Interacts with HSP90 in the lysosome lumen; this enhances LAMP2 stability. Interacts with MLLT11. Interacts with ABCB9. Interacts with FURIN. Interacts with CT55; this interaction may be important for LAMP2 protein stability. Interacts with TMEM175; inhibiting the proton channel activity of TMEM175. Forms a ternary complex with RAB7A and RUFY4 (via RUN domain); the interaction with RAB7A is mediated by RUFY4 (via RUN and coiled coil domains). In terms of processing, extensively N-glycosylated. Contains a minor proportion of O-linked glycans. As to expression, detected in liver and kidney (at protein level). Detected in liver and kidney.

Its subcellular location is the lysosome membrane. The protein localises to the endosome membrane. The protein resides in the cytoplasmic vesicle. It is found in the autophagosome membrane. It localises to the cell membrane. Functionally, lysosomal membrane glycoprotein which plays an important role in lysosome biogenesis, lysosomal pH regulation and autophagy. Acts as an important regulator of lysosomal lumen pH regulation by acting as a direct inhibitor of the proton channel TMEM175, facilitating lysosomal acidification for optimal hydrolase activity. Plays an important role in chaperone-mediated autophagy, a process that mediates lysosomal degradation of proteins in response to various stresses and as part of the normal turnover of proteins with a long biological half-live. Functions by binding target proteins, such as GAPDH, NLRP3 and MLLT11, and targeting them for lysosomal degradation. In the chaperone-mediated autophagy, acts downstream of chaperones, such as HSPA8/HSC70, which recognize and bind substrate proteins and mediate their recruitment to lysosomes, where target proteins bind LAMP2. Plays a role in lysosomal protein degradation in response to starvation. Required for the fusion of autophagosomes with lysosomes during autophagy. Cells that lack LAMP2 express normal levels of VAMP8, but fail to accumulate STX17 on autophagosomes, which is the most likely explanation for the lack of fusion between autophagosomes and lysosomes. Required for normal degradation of the contents of autophagosomes. Required for efficient MHC class II-mediated presentation of exogenous antigens via its function in lysosomal protein degradation; antigenic peptides generated by proteases in the endosomal/lysosomal compartment are captured by nascent MHC II subunits. Is not required for efficient MHC class II-mediated presentation of endogenous antigens. In Mus musculus (Mouse), this protein is Lysosome-associated membrane glycoprotein 2 (Lamp2).